The following is a 129-amino-acid chain: Follitropin subunit beta (129 aa).

A signal peptide spans 1–20; that stretch reads MKTLQFFFLFCCWKAICCNS. 6 disulfides stabilise this stretch: C21-C69, C35-C84, C38-C122, C46-C100, C50-C102, and C105-C112. N-linked (GlcNAc...) asparagine glycans are attached at residues N25 and N42.

It belongs to the glycoprotein hormones subunit beta family. In terms of assembly, heterodimer. The active follitropin is a heterodimer composed of an alpha chain/CGA shared with other hormones and a unique beta chain/FSHB shown here.

Its subcellular location is the secreted. Functionally, together with the alpha chain CGA constitutes follitropin, the follicle-stimulating hormone, and provides its biological specificity to the hormone heterodimer. Binds FSHR, a G protein-coupled receptor, on target cells to activate downstream signaling pathways. Follitropin is involved in follicle development and spermatogenesis in reproductive organs. The polypeptide is Follitropin subunit beta (FSHB) (Pan troglodytes (Chimpanzee)).